Reading from the N-terminus, the 242-residue chain is Adapter protein MecA (242 aa).

Belongs to the MecA family. As to quaternary structure, homodimer.

In terms of biological role, enables the recognition and targeting of unfolded and aggregated proteins to the ClpC protease or to other proteins involved in proteolysis. This chain is Adapter protein MecA, found in Streptococcus gordonii (strain Challis / ATCC 35105 / BCRC 15272 / CH1 / DL1 / V288).